A 963-amino-acid polypeptide reads, in one-letter code: Ubiquitin carboxyl-terminal hydrolase 11 (963 aa).

Positions 64–93 (VTEDREPQHEELPGLDSQWRQIENGESGRE) are disordered. A compositionally biased stretch (basic and acidic residues) spans 65–75 (TEDREPQHEEL). Residues 76–184 (PGLDSQWRQI…GQPPIERKVI (109 aa)) enclose the DUSP domain. At Lys245 the chain carries N6-acetyllysine. A USP domain is found at 309 to 930 (CGLTNLGNTC…AAYVLFYQRQ (622 aa)). Cys318 functions as the Nucleophile in the catalytic mechanism. Disordered regions lie at residues 644–691 (TKPN…SGVT) and 716–735 (LFTL…TSPE). The residue at position 648 (Ser648) is a Phosphoserine. A compositionally biased stretch (acidic residues) spans 649 to 665 (DDEDDGDEKEDDEEDKD). The span at 717–731 (FTLQTVNSNGTSDRT) shows a compositional bias: polar residues. Phosphoserine is present on Ser733. The active-site Proton acceptor is His888. A compositionally biased stretch (low complexity) spans 938–957 (SPAGSSGAPASPACSSPPSS). Residues 938 to 963 (SPAGSSGAPASPACSSPPSSEFMDVN) form a disordered region. At Ser948 the chain carries Phosphoserine.

This sequence belongs to the peptidase C19 family. As to quaternary structure, monomer. Associated component of the Polycomb group (PcG) multiprotein PRC1-like complex. Interacts with RANBP9/RANBPM. Interacts with BRCA2. Interacts with CHUK/IKKA. Interacts with NFKBIA. Interacts with SPRY3, RAE1, MYCBP2/PAM, and KCTD6. (Microbial infection) Interacts with papilloma virus protein 16E7.

It localises to the nucleus. It is found in the cytoplasm. The protein resides in the chromosome. It catalyses the reaction Thiol-dependent hydrolysis of ester, thioester, amide, peptide and isopeptide bonds formed by the C-terminal Gly of ubiquitin (a 76-residue protein attached to proteins as an intracellular targeting signal).. In terms of biological role, protease that can remove conjugated ubiquitin from target proteins and polyubiquitin chains. Inhibits the degradation of target proteins by the proteasome. Cleaves preferentially 'Lys-6' and 'Lys-63'-linked ubiquitin chains. Has lower activity with 'Lys-11' and 'Lys-33'-linked ubiquitin chains, and extremely low activity with 'Lys-27', 'Lys-29' and 'Lys-48'-linked ubiquitin chains (in vitro). Plays a role in the regulation of pathways leading to NF-kappa-B activation. Plays a role in the regulation of DNA repair after double-stranded DNA breaks. Acts as a chromatin regulator via its association with the Polycomb group (PcG) multiprotein PRC1-like complex; may act by deubiquitinating components of the PRC1-like complex. Promotes cell proliferation by deubiquitinating phosphorylated E2F1. The protein is Ubiquitin carboxyl-terminal hydrolase 11 (USP11) of Homo sapiens (Human).